The following is a 690-amino-acid chain: MPYLYRAPGPQAHPVPKDARITHSSGQSFEQMRQECLQRGTLFEDADFPASNSSLFYSERPQIPFVWKRPGEIVKNPEFILGGATRTDICQGELGDCWLLAAIASLTLNQKALARVIPQDQSFGPGYAGIFHFQFWQHSEWLDVVIDDRLPTFRDRLVFLHSADHNEFWSALLEKAYAKLNGSYEALKGGSAIEAMEDFTGGVAETFQTKEAPENFYEILEKALKRGSLLGCFIDTRSAAESEARTPFGLIKGHAYSVTGIDQVSFRGQRIELIRIRNPWGQVEWNGSWSDSSPEWRSVGPAEQKRLCHTALDDGEFWMAFKDFKAHFDKVEICNLTPDALEEDAIHKWEVTVHQGSWVRGSTAGGCRNFLDTFWTNPQIKLSLTEKDEGQEECSFLVALMQKDRRKLKRFGANVLTIGYAIYECPDKDEHLNKDFFRYHASRARSKTFINLREVSDRFKLPPGEYILIPSTFEPHQEADFCLRIFSEKKAITRDMDGNVDIDLPEPPKPTPPDQETEEEQRFRALFEQVAGEDMEVTAEELEYVLNAVLQKKKDIKFKKLSLISCKNIISLMDTSGNGKLEFDEFKVFWDKLKQWINLFLRFDADKSGTMSTYELRTALKAAGFQLSSHLLQLIVLRYADEELQLDFDDFLNCLVRLENASRVFQALSTKNKEFIHLNINEFIHLTMNI.

The disordered stretch occupies residues Met1 to Ser24. The region spanning Leu42–Thr337 is the Calpain catalytic domain. Positions 81, 83, and 88 each coordinate Ca(2+). Cys97 is an active-site residue. Residue Glu167 participates in Ca(2+) binding. Catalysis depends on residues His254 and Asn278. 5 residues coordinate Ca(2+): Glu284, Asp291, Leu312, Asp314, and Glu316. The domain III stretch occupies residues Pro338 to Gln521. A disordered region spans residues Gly498–Glu519. 3 consecutive EF-hand domains span residues Glu518–Lys552, Leu561–Phe589, and Asp591–Gln626. Positions Arg522–Ile690 are domain IV. 10 residues coordinate Ca(2+): Asp574, Ser576, Asn578, Lys580, Glu585, Asp604, Asp606, Ser608, Thr610, and Glu615.

It belongs to the peptidase C2 family. Expressed predominantly in stomach.

Functionally, calcium-regulated non-lysosomal thiol-protease. The sequence is that of Calpain-9 (CAPN9) from Homo sapiens (Human).